Consider the following 1064-residue polypeptide: Serine protease inhibitor Kazal-type 5 (1064 aa).

The signal sequence occupies residues 1 to 22 (MKIATVSVLLPLALCLIQDAAS). The Kazal-like 1; atypical domain maps to 28-66 (EMCHEFQAFMKNGKLFCPQDKKFFQSLDGIMFINKCATC). 21 cysteine pairs are disulfide-bonded: C30–C66, C44–C63, C97–C133, C111–C130, C119–C151, C161–C197, C175–C194, C225–C261, C239–C258, C297–C333, C311–C330, C367–C403, C381–C400, C437–C473, C451–C470, C496–C532, C510–C529, C567–C603, C581–C600, C632–C668, and C646–C665. Kazal-like domains are found at residues 91-153 (APTE…ECKS), 155-216 (NPEQ…ETRI), 219-285 (NAEK…KAEE), 291-352 (REIV…ARAR), 361-423 (TSYA…KSRN), 431-489 (ASFE…KAKR), 490-551 (EAAK…EEKG), 561-622 (EAVQ…PRAK), 626-688 (EAEK…EDQR), 701-757 (GNTQ…KNEY), 768-830 (ESGK…EDRS), 843-905 (NDKE…EKSS), 910-971 (NNAK…EKPS), and 987-1048 (SLDS…KCEE). Basic and acidic residues predominate over residues 676–688 (NEERKRKEEEDQR). Positions 676–705 (NEERKRKEEEDQRNAAGHGSSGGGGGNTQD) are disordered. 6 disulfides stabilise this stretch: C707–C743, C721–C740, C774–C810, C788–C807, C849–C885, and C863–C882. The disordered stretch occupies residues 751 to 775 (AERKNEYSRSRSNGTGSESGKDTCD). The segment at 818-849 (AAEKKKKEDEDRSNTGERSNTGERSNDKEDLC) is disordered. Basic and acidic residues predominate over residues 895-905 (ERKKKDEEKSS). Residues 895 to 915 (ERKKKDEEKSSSKPSNNAKDE) form a disordered region. 2 disulfides stabilise this stretch: C916/C952 and C930/C949. The segment covering 967 to 977 (QEKPSHVRASQ) has biased composition (basic and acidic residues). A disordered region spans residues 967–987 (QEKPSHVRASQEEDSPDSFSS). Disulfide bonds link C993–C1028, C1006–C1025, and C1014–C1046. The disordered stretch occupies residues 1041–1064 (RSTGKCEESSTPGTTAASMPPSDE).

In terms of processing, proteolytically processed by furin in individual domains (D1, D5, D6, D8 through D11, and D9 through D15) exhibiting various inhibitory potentials for multiple proteases. Highly expressed in the thymus and stratum corneum. Also found in the oral mucosa, parathyroid gland, Bartholin's glands, tonsils, and vaginal epithelium. Very low levels are detected in lung, kidney, and prostate.

The protein resides in the secreted. Its function is as follows. Serine protease inhibitor, probably important for the anti-inflammatory and/or antimicrobial protection of mucous epithelia. Contribute to the integrity and protective barrier function of the skin by regulating the activity of defense-activating and desquamation-involved proteases. Inhibits KLK5, it's major target, in a pH-dependent manner. Inhibits KLK7, KLK14 CASP14, and trypsin. The protein is Serine protease inhibitor Kazal-type 5 (SPINK5) of Homo sapiens (Human).